A 247-amino-acid chain; its full sequence is Inhibitory synaptic factor 1 (247 aa).

Positions 30 to 65 form a coiled coil; sequence RAVIGQLEGILRDLKEVAKELKEVVEQIDRLTSDFE. 3 disordered regions span residues 69 to 90, 112 to 166, and 180 to 217; these read DTDD…GGPL, ASTP…RDRV, and DDSE…GVRK. The span at 76–85 shows a compositional bias: polar residues; that stretch reads GTVSSTSSSE.

The protein belongs to the INSYN1 family.

It is found in the postsynaptic density. Its function is as follows. May be a component of the protein machinery at the inhibitory synapses, probably acting as a scaffold. This Xenopus laevis (African clawed frog) protein is Inhibitory synaptic factor 1.